We begin with the raw amino-acid sequence, 560 residues long: MRSDKIKLGFDKAPHRSLLKATGAIQSDEDFQKPFIGIANSYIDIIPGHVHLHDFAKRIKEAVRKAGGIPFEFNTIGVDDGIAMGHIGMRYSLASRELIADAVETVVGAHWLDAMICIPNCDKIVPGMMMAAVRLDIPTIFISGGPMKVGVMADGEKVDLISVFEGVGEYSSGKIDDARLKELENNGCPTCGSCSGMFTANSMNCLAEALGLALPGNGTILAVDPKREALAEAAAKQIMTLVEKDIKPSDLLSRESFLNAFALDLAMGGSTNTILHTLAIANEAGINFDLAELNTLAAKTPYICKVSPATKNVHIEDVDRAGGISAILKELSKLDGVLDLSRPTVTGKTLGENIADAEVKDKAVIHSVEDPYSATGGLAVLFGNLAPQGCVVKTGAVDPKMMQHTGPARIYESQDEAISGILKGDVQAGEVVVIRYEGPKGGPGMPEMLAPTSTIMGQGLGDKVALITDGRFSGGTRGACIGHVSPEAAERGPIAALQNGDKITIDIPNKRIAVDLSDEEIEARLKALPPFEPKIKRGYLARYSQMVTSAGSGAVLKSFD.

Residue aspartate 80 coordinates Mg(2+). Cysteine 121 is a [2Fe-2S] cluster binding site. Aspartate 122 and lysine 123 together coordinate Mg(2+). At lysine 123 the chain carries N6-carboxylysine. Cysteine 194 serves as a coordination point for [2Fe-2S] cluster. Residue glutamate 447 participates in Mg(2+) binding. Serine 473 acts as the Proton acceptor in catalysis.

Belongs to the IlvD/Edd family. As to quaternary structure, homodimer. [2Fe-2S] cluster serves as cofactor. Requires Mg(2+) as cofactor.

The catalysed reaction is (2R)-2,3-dihydroxy-3-methylbutanoate = 3-methyl-2-oxobutanoate + H2O. The enzyme catalyses (2R,3R)-2,3-dihydroxy-3-methylpentanoate = (S)-3-methyl-2-oxopentanoate + H2O. It functions in the pathway amino-acid biosynthesis; L-isoleucine biosynthesis; L-isoleucine from 2-oxobutanoate: step 3/4. The protein operates within amino-acid biosynthesis; L-valine biosynthesis; L-valine from pyruvate: step 3/4. Functionally, functions in the biosynthesis of branched-chain amino acids. Catalyzes the dehydration of (2R,3R)-2,3-dihydroxy-3-methylpentanoate (2,3-dihydroxy-3-methylvalerate) into 2-oxo-3-methylpentanoate (2-oxo-3-methylvalerate) and of (2R)-2,3-dihydroxy-3-methylbutanoate (2,3-dihydroxyisovalerate) into 2-oxo-3-methylbutanoate (2-oxoisovalerate), the penultimate precursor to L-isoleucine and L-valine, respectively. This chain is Dihydroxy-acid dehydratase, found in Chloroherpeton thalassium (strain ATCC 35110 / GB-78).